The chain runs to 369 residues: Anhydro-N-acetylmuramic acid kinase (369 aa).

12–19 (GTSLDGVD) provides a ligand contact to ATP.

Belongs to the anhydro-N-acetylmuramic acid kinase family.

The catalysed reaction is 1,6-anhydro-N-acetyl-beta-muramate + ATP + H2O = N-acetyl-D-muramate 6-phosphate + ADP + H(+). Its pathway is amino-sugar metabolism; 1,6-anhydro-N-acetylmuramate degradation. It functions in the pathway cell wall biogenesis; peptidoglycan recycling. In terms of biological role, catalyzes the specific phosphorylation of 1,6-anhydro-N-acetylmuramic acid (anhMurNAc) with the simultaneous cleavage of the 1,6-anhydro ring, generating MurNAc-6-P. Is required for the utilization of anhMurNAc either imported from the medium or derived from its own cell wall murein, and thus plays a role in cell wall recycling. The polypeptide is Anhydro-N-acetylmuramic acid kinase (Shigella flexneri).